Consider the following 243-residue polypeptide: 1-(5-phosphoribosyl)-5-[(5-phosphoribosylamino)methylideneamino] imidazole-4-carboxamide isomerase (243 aa).

Asp8 serves as the catalytic Proton acceptor. Catalysis depends on Asp130, which acts as the Proton donor.

Belongs to the HisA/HisF family.

It localises to the cytoplasm. The catalysed reaction is 1-(5-phospho-beta-D-ribosyl)-5-[(5-phospho-beta-D-ribosylamino)methylideneamino]imidazole-4-carboxamide = 5-[(5-phospho-1-deoxy-D-ribulos-1-ylimino)methylamino]-1-(5-phospho-beta-D-ribosyl)imidazole-4-carboxamide. The protein operates within amino-acid biosynthesis; L-histidine biosynthesis; L-histidine from 5-phospho-alpha-D-ribose 1-diphosphate: step 4/9. This is 1-(5-phosphoribosyl)-5-[(5-phosphoribosylamino)methylideneamino] imidazole-4-carboxamide isomerase from Acinetobacter baumannii (strain AB307-0294).